The sequence spans 247 residues: Cytochrome c oxidase subunit 2 (247 aa).

At 12–38 the chain is on the mitochondrial intermembrane side; the sequence is DVPTPWGLYFQDSSTPNQEGIIELHDN. A helical transmembrane segment spans residues 39–59; the sequence is IMFYLVLILCTVSWLLFSIVK. The Mitochondrial matrix segment spans residues 60–78; the sequence is DSSKNPLPHKYLVHGQTIE. A helical transmembrane segment spans residues 79 to 101; sequence IIWTILPAVVLLIIAFPSFILLY. Topologically, residues 102–247 are mitochondrial intermembrane; that stretch reads LCDEVISPAM…KEFLTWLNEQ (146 aa). H182, C217, E219, C221, H225, and M228 together coordinate Cu cation. Residue E219 coordinates Mg(2+).

This sequence belongs to the cytochrome c oxidase subunit 2 family. As to quaternary structure, component of the cytochrome c oxidase (complex IV, CIV), a multisubunit enzyme composed of a catalytic core of 3 subunits and several supernumerary subunits. The complex exists as a monomer or a dimer and forms supercomplexes (SCs) in the inner mitochondrial membrane with ubiquinol-cytochrome c oxidoreductase (cytochrome b-c1 complex, complex III, CIII). Cu cation is required as a cofactor. The signal sequence of COX2 is processed by IMP1.

It localises to the mitochondrion inner membrane. It catalyses the reaction 4 Fe(II)-[cytochrome c] + O2 + 8 H(+)(in) = 4 Fe(III)-[cytochrome c] + 2 H2O + 4 H(+)(out). Component of the cytochrome c oxidase, the last enzyme in the mitochondrial electron transport chain which drives oxidative phosphorylation. The respiratory chain contains 3 multisubunit complexes succinate dehydrogenase (complex II, CII), ubiquinol-cytochrome c oxidoreductase (cytochrome b-c1 complex, complex III, CIII) and cytochrome c oxidase (complex IV, CIV), that cooperate to transfer electrons derived from NADH and succinate to molecular oxygen, creating an electrochemical gradient over the inner membrane that drives transmembrane transport and the ATP synthase. Cytochrome c oxidase is the component of the respiratory chain that catalyzes the reduction of oxygen to water. Electrons originating from reduced cytochrome c in the intermembrane space (IMS) are transferred via the dinuclear copper A center (CU(A)) of subunit 2 and heme A of subunit 1 to the active site in subunit 1, a binuclear center (BNC) formed by heme A3 and copper B (CU(B)). The BNC reduces molecular oxygen to 2 water molecules using 4 electrons from cytochrome c in the IMS and 4 protons from the mitochondrial matrix. The sequence is that of Cytochrome c oxidase subunit 2 (COX2) from Cyberlindnera saturnus (Yeast).